Here is a 94-residue protein sequence, read N- to C-terminus: uncharacterized protein (94 aa).

In terms of tissue distribution, expressed in heart.

This is an uncharacterized protein from Homo sapiens (Human).